The sequence spans 332 residues: Ribosomal RNA small subunit methyltransferase H (332 aa).

S-adenosyl-L-methionine contacts are provided by residues 39–41, D56, F83, D100, and Q107; that span reads GGY.

The protein belongs to the methyltransferase superfamily. RsmH family.

Its subcellular location is the cytoplasm. The catalysed reaction is cytidine(1402) in 16S rRNA + S-adenosyl-L-methionine = N(4)-methylcytidine(1402) in 16S rRNA + S-adenosyl-L-homocysteine + H(+). In terms of biological role, specifically methylates the N4 position of cytidine in position 1402 (C1402) of 16S rRNA. The polypeptide is Ribosomal RNA small subunit methyltransferase H (Bartonella tribocorum (strain CIP 105476 / IBS 506)).